A 506-amino-acid chain; its full sequence is tRNA-2-methylthio-N(6)-dimethylallyladenosine synthase (506 aa).

An MTTase N-terminal domain is found at 14–132; the sequence is KSYEVRTYGC…LPVLLERARV (119 aa). The [4Fe-4S] cluster site is built by Cys-23, Cys-61, Cys-95, Cys-169, Cys-173, and Cys-176. Residues 155-386 enclose the Radical SAM core domain; it reads RESAYAAWVS…ALQEQISWDE (232 aa). The TRAM domain maps to 388-456; that stretch reads KKQVGRTLDV…PHHLLAEGTP (69 aa).

Belongs to the methylthiotransferase family. MiaB subfamily. As to quaternary structure, monomer. It depends on [4Fe-4S] cluster as a cofactor.

The protein resides in the cytoplasm. The catalysed reaction is N(6)-dimethylallyladenosine(37) in tRNA + (sulfur carrier)-SH + AH2 + 2 S-adenosyl-L-methionine = 2-methylsulfanyl-N(6)-dimethylallyladenosine(37) in tRNA + (sulfur carrier)-H + 5'-deoxyadenosine + L-methionine + A + S-adenosyl-L-homocysteine + 2 H(+). Its function is as follows. Catalyzes the methylthiolation of N6-(dimethylallyl)adenosine (i(6)A), leading to the formation of 2-methylthio-N6-(dimethylallyl)adenosine (ms(2)i(6)A) at position 37 in tRNAs that read codons beginning with uridine. The sequence is that of tRNA-2-methylthio-N(6)-dimethylallyladenosine synthase from Streptomyces griseus subsp. griseus (strain JCM 4626 / CBS 651.72 / NBRC 13350 / KCC S-0626 / ISP 5235).